We begin with the raw amino-acid sequence, 272 residues long: Ribonuclease HII (272 aa).

An RNase H type-2 domain is found at 87-272 (KYVAGVDEVG…HRMSFLKNIL (186 aa)). A divalent metal cation is bound by residues Asp93, Glu94, and Asp188.

The protein belongs to the RNase HII family. Requires Mn(2+) as cofactor. Mg(2+) is required as a cofactor.

It is found in the cytoplasm. It catalyses the reaction Endonucleolytic cleavage to 5'-phosphomonoester.. In terms of biological role, endonuclease that specifically degrades the RNA of RNA-DNA hybrids. This chain is Ribonuclease HII, found in Clostridium perfringens (strain ATCC 13124 / DSM 756 / JCM 1290 / NCIMB 6125 / NCTC 8237 / Type A).